The following is a 418-amino-acid chain: Synaptotagmin-15 (418 aa).

The Extracellular segment spans residues 1 to 4 (MAEQ). The helical; Signal-anchor for type III membrane protein transmembrane segment at 5-27 (LAFLIGGIIGGLLLLIGVSCCLW) threads the bilayer. Residues 28-418 (RRFCATFTYE…WHALCRPTEP (391 aa)) are Cytoplasmic-facing. C2 domains follow at residues 144–261 (CLGR…HRII) and 275–396 (EFGD…EHWG).

Belongs to the synaptotagmin family. In terms of assembly, homodimer. Isoform 1 and isoform 2 are expressed in heart, lung, skeletal muscle and testis; not detected in brain, liver and kidney. Isoform 1 is expressed in spleen.

The protein resides in the membrane. Functionally, may be involved in the trafficking and exocytosis of secretory vesicles in non-neuronal tissues. This Mus musculus (Mouse) protein is Synaptotagmin-15 (Syt15).